Here is a 37-residue protein sequence, read N- to C-terminus: Large ribosomal subunit protein bL36c (37 aa).

This sequence belongs to the bacterial ribosomal protein bL36 family.

Its subcellular location is the plastid. It localises to the chloroplast. The protein is Large ribosomal subunit protein bL36c of Pleurastrum terricola (Filamentous green alga).